Here is a 217-residue protein sequence, read N- to C-terminus: Adenylate kinase (217 aa).

Position 10–15 (10–15) interacts with ATP; that stretch reads GAGKGT. The interval 30–59 is NMP; that stretch reads STGDMLRAAVKAESELGLQVKEVMASGGLV. Residues Thr-31, Arg-36, 57–59, 85–88, and Gln-92 each bind AMP; these read GLV and GFPR. The interval 122-159 is LID; sequence GRRVHEGSGRIYHVKYDPPKVEGKDDETGEALIQREDD. ATP is bound by residues Arg-123 and 132 to 133; that span reads IY. Residues Arg-156 and Arg-167 each coordinate AMP. Position 203 (Gly-203) interacts with ATP.

Belongs to the adenylate kinase family. As to quaternary structure, monomer.

It is found in the cytoplasm. It catalyses the reaction AMP + ATP = 2 ADP. The protein operates within purine metabolism; AMP biosynthesis via salvage pathway; AMP from ADP: step 1/1. In terms of biological role, catalyzes the reversible transfer of the terminal phosphate group between ATP and AMP. Plays an important role in cellular energy homeostasis and in adenine nucleotide metabolism. This is Adenylate kinase from Marinobacter nauticus (strain ATCC 700491 / DSM 11845 / VT8) (Marinobacter aquaeolei).